The primary structure comprises 289 residues: 4-hydroxybenzoate octaprenyltransferase (289 aa).

9 helical membrane passes run 22–42, 45–65, 96–116, 118–138, 140–160, 164–184, 211–231, 236–256, and 267–287; these read AGWL…SHGF, WHLV…GCCI, LGLG…TNAV, IAWS…KRYV, MPQA…FAAV, VPPL…AYDT, VAGV…ALIQ, AIFM…GWLI, and AFRL…LSYW.

This sequence belongs to the UbiA prenyltransferase family. Mg(2+) is required as a cofactor.

Its subcellular location is the cell inner membrane. It catalyses the reaction all-trans-octaprenyl diphosphate + 4-hydroxybenzoate = 4-hydroxy-3-(all-trans-octaprenyl)benzoate + diphosphate. The protein operates within cofactor biosynthesis; ubiquinone biosynthesis. Catalyzes the prenylation of para-hydroxybenzoate (PHB) with an all-trans polyprenyl group. Mediates the second step in the final reaction sequence of ubiquinone-8 (UQ-8) biosynthesis, which is the condensation of the polyisoprenoid side chain with PHB, generating the first membrane-bound Q intermediate 3-octaprenyl-4-hydroxybenzoate. This chain is 4-hydroxybenzoate octaprenyltransferase, found in Polaromonas naphthalenivorans (strain CJ2).